The sequence spans 297 residues: uncharacterized protein (297 aa).

2 helical membrane-spanning segments follow: residues 17 to 37 and 48 to 68; these read LALSGGGFYGFAVVGALKEIF and TISGVSVGSIIATMLAIGYSI. In terms of domain architecture, PNPLA spans 17-196; sequence LALSGGGFYG…TLNYPITLFD (180 aa). The GXGXXG signature appears at 21–26; sequence GGGFYG. Positions 51-55 match the GXSXG motif; it reads GVSVG. Catalysis depends on Ser-53, which acts as the Nucleophile. A glycan (N-linked (GlcNAc...) asparagine; by host) is linked at Asn-122. Asp-183 serves as the catalytic Proton acceptor. The DGA/G motif lies at 183–185; sequence DGG. N-linked (GlcNAc...) asparagine; by host glycosylation occurs at Asn-239.

The protein resides in the membrane. Its function is as follows. Probable lipid hydrolase. This is an uncharacterized protein from Acanthamoeba polyphaga mimivirus (APMV).